A 452-amino-acid polypeptide reads, in one-letter code: MLNGSASKPATARKSAGLTGSVRIPGDKSISHRSFMIGGLASGETRITGLLEGEDVINTGRAMQAMGARIRKEGAQWVIEGTGNGALLAPDAPLDFGNAGTGVRLTMGLVGTYDFHSTFIGDASLSKRPMGRVLNPLREMGVQVSASEGDRLPVTLRGPGTPSPIRYRVPMASAQVKSAVLLAGLNTPGVTTVIEPVMTRDHTEKMLQGFGAALSVETDGDGVRTIRLEGRGKLAGQVIDVPGDPSSTAFPLVAALIVPGSDITIVNVLMNPTRTGLILTLQEMGADIEVVNARLAGGEDVADLRVRHSELKGVTVPEDRAPSMIDEYPILAVAACFAEGATVMKGLEELRVKESDRLSAVADGLKLNGVDCDEGEDFLIVRGRPDGKGLGNAADGRVSTHLDHRIAMSFLVLGLASEHAVTIDDAAMIATSFPEFMQLMTGLGAKIELVAE.

Residues 1 to 23 form a disordered region; it reads MLNGSASKPATARKSAGLTGSVR. 3 residues coordinate 3-phosphoshikimate: Lys28, Ser29, and Arg33. Lys28 lines the phosphoenolpyruvate pocket. Phosphoenolpyruvate contacts are provided by Gly100 and Arg128. The 3-phosphoshikimate site is built by Ser173, Gln175, Asp326, and Lys353. Gln175 provides a ligand contact to phosphoenolpyruvate. The active-site Proton acceptor is Asp326. Residues Arg357 and Arg405 each contribute to the phosphoenolpyruvate site.

The protein belongs to the EPSP synthase family. Monomer.

The protein localises to the cytoplasm. The enzyme catalyses 3-phosphoshikimate + phosphoenolpyruvate = 5-O-(1-carboxyvinyl)-3-phosphoshikimate + phosphate. Its pathway is metabolic intermediate biosynthesis; chorismate biosynthesis; chorismate from D-erythrose 4-phosphate and phosphoenolpyruvate: step 6/7. Functionally, catalyzes the transfer of the enolpyruvyl moiety of phosphoenolpyruvate (PEP) to the 5-hydroxyl of shikimate-3-phosphate (S3P) to produce enolpyruvyl shikimate-3-phosphate and inorganic phosphate. The sequence is that of 3-phosphoshikimate 1-carboxyvinyltransferase from Rhizobium johnstonii (strain DSM 114642 / LMG 32736 / 3841) (Rhizobium leguminosarum bv. viciae).